The sequence spans 108 residues: MNILLIILASLFSCAGQLCQKQATTVSGGRRPLLLWLGGSVLLLGMAMLVWLRVLQTVPVGVAYPMLSLNFIFVTLAARWLWRETLSLRHALGVILIVAGVAIMGSYT.

3 consecutive transmembrane segments (helical) span residues 32–52, 58–78, and 85–105; these read PLLLWLGGSVLLLGMAMLVWL, VPVGVAYPMLSLNFIFVTLAA, and TLSLRHALGVILIVAGVAIMG. An EamA domain is found at 34-106; sequence LLWLGGSVLL…IVAGVAIMGS (73 aa).

The protein belongs to the ArnE family. As to quaternary structure, heterodimer of ArnE and ArnF.

The protein localises to the cell inner membrane. It functions in the pathway bacterial outer membrane biogenesis; lipopolysaccharide biosynthesis. Functionally, translocates 4-amino-4-deoxy-L-arabinose-phosphoundecaprenol (alpha-L-Ara4N-phosphoundecaprenol) from the cytoplasmic to the periplasmic side of the inner membrane. The chain is Probable 4-amino-4-deoxy-L-arabinose-phosphoundecaprenol flippase subunit ArnE from Erwinia tasmaniensis (strain DSM 17950 / CFBP 7177 / CIP 109463 / NCPPB 4357 / Et1/99).